Consider the following 113-residue polypeptide: Endoribonuclease SymE (113 aa).

The SpoVT-AbrB domain maps to 29–74 (SRYPDYSRIPAITLKGQWLEAAGFATGTAVDVKVMEGCIVLTAQPP).

Belongs to the SymE family.

It localises to the cytoplasm. Involved in the degradation and recycling of damaged RNA. It is itself a target for degradation by the ATP-dependent protease Lon. This chain is Endoribonuclease SymE, found in Escherichia coli (strain K12 / MC4100 / BW2952).